The chain runs to 1224 residues: DNA-directed RNA polymerase subunit beta'' (1224 aa).

Residues Cys-233, Cys-308, Cys-315, and Cys-318 each coordinate Zn(2+).

The protein belongs to the RNA polymerase beta' chain family. RpoC2 subfamily. In plastids the minimal PEP RNA polymerase catalytic core is composed of four subunits: alpha, beta, beta', and beta''. When a (nuclear-encoded) sigma factor is associated with the core the holoenzyme is formed, which can initiate transcription. Requires Zn(2+) as cofactor.

It localises to the plastid. The protein resides in the chloroplast. The enzyme catalyses RNA(n) + a ribonucleoside 5'-triphosphate = RNA(n+1) + diphosphate. Functionally, DNA-dependent RNA polymerase catalyzes the transcription of DNA into RNA using the four ribonucleoside triphosphates as substrates. The protein is DNA-directed RNA polymerase subunit beta'' of Pinus thunbergii (Japanese black pine).